A 181-amino-acid chain; its full sequence is Squamosa promoter-binding-like protein 5 (181 aa).

The segment covering 1–10 (MEGQRTQRRG) has biased composition (basic residues). A disordered region spans residues 1–58 (MEGQRTQRRGYLKDKATVSNLVEEEMENGMDGEEEDGGDEDKRKKVMERVRGPSTDRV). The span at 22 to 39 (VEEEMENGMDGEEEDGGD) shows a compositional bias: acidic residues. Positions 40–51 (EDKRKKVMERVR) are enriched in basic and acidic residues. An SBP-type zinc finger spans residues 60-137 (SRLCQVDRCT…AGHNERRRKI (78 aa)). Zn(2+) is bound by residues C63, C68, C85, H88, C104, C107, H111, and C123. The Bipartite nuclear localization signal motif lies at 120–136 (KRSCRRRLAGHNERRRK). The segment at 128–181 (AGHNERRRKISGDSFGEGSGRRGFSGQLIQTQERNRVDRKLPMTNSSFKRPQIR) is disordered. Polar residues predominate over residues 170-181 (MTNSSFKRPQIR).

The cofactor is Zn(2+). As to expression, expressed in the inflorescence apical meristem and young flowers.

It is found in the nucleus. The protein resides in the cytoplasm. Functionally, trans-acting factor that binds specifically to the consensus nucleotide sequence 5'-TNCGTACAA-3' of AP1 promoter. Promotes both vegetative phase change and flowering. This chain is Squamosa promoter-binding-like protein 5 (SPL5), found in Arabidopsis thaliana (Mouse-ear cress).